We begin with the raw amino-acid sequence, 549 residues long: Probable chaperonin-like protein PrmG (549 aa).

The protein belongs to the chaperonin (HSP60) family.

Its function is as follows. Probably plays an essential role in the productive folding of PrmA, and thus in the formation of the active PrmABCD complex. The sequence is that of Probable chaperonin-like protein PrmG (prmG) from Rhodococcus jostii (strain RHA1).